Consider the following 396-residue polypeptide: MAAAVDTFLFTSESVNEGHPDKLCDQISDAVLDACLAQDPESKVACETCTKTNLVMVFGEITTKANVDYEKIVRQTCRDIGFVSADVGLDADNCKVLVNIEQQSPDIAQGVHGHLTRRPEEIGAGDQGHMFGYATDETPELMPLSHVLATKLGARLTEVRKNGTCPWLRPDGKTQVTVEYYNENGAMVPIRVHTVLISTQHDETVTNDEIAADLKEHVIKPVIPEKYLDEKTIFHLNPSGRFVIGGPHGDAGLTGRKIIIDTYGGWGAHGGGAFSGKDPTKVDRSGAYIARQAAKSIVAAGLARRCIVQISYAIGVPEPLSVFVDTYGTGKIPDKEILKIVKESFDFRPGMIAINLDLLKGGSRYLKTAAYGHFGRDDADFTWETVKPLKWEKPQA.

Glutamate 13 lines the Mg(2+) pocket. Histidine 19 is an ATP binding site. Glutamate 47 is a K(+) binding site. L-methionine-binding residues include glutamate 60 and glutamine 103. Residues 171–173, 239–242, aspartate 250, 256–257, alanine 273, lysine 277, and lysine 281 contribute to the ATP site; these read DGK, SGRF, and RK. Aspartate 250 serves as a coordination point for L-methionine. Lysine 281 is an L-methionine binding site.

This sequence belongs to the AdoMet synthase family. Homotetramer. Mn(2+) is required as a cofactor. Requires Mg(2+) as cofactor. Co(2+) serves as cofactor. It depends on K(+) as a cofactor. Expressed in roots, stems and leaves (at protein level).

It is found in the cytoplasm. The enzyme catalyses L-methionine + ATP + H2O = S-adenosyl-L-methionine + phosphate + diphosphate. It functions in the pathway amino-acid biosynthesis; S-adenosyl-L-methionine biosynthesis; S-adenosyl-L-methionine from L-methionine: step 1/1. In terms of biological role, catalyzes the formation of S-adenosylmethionine from methionine and ATP. The reaction comprises two steps that are both catalyzed by the same enzyme: formation of S-adenosylmethionine (AdoMet) and triphosphate, and subsequent hydrolysis of the triphosphate. May be involved in the synthesis of betain in response to abiotic stress such as high salinity. The polypeptide is S-adenosylmethionine synthase 3 (SAMS3) (Atriplex nummularia (Old man saltbush)).